Here is a 181-residue protein sequence, read N- to C-terminus: Organ-specific protein S2 (181 aa).

A run of 4 repeats spans residues 59–84 (HAKENMGAIGEFEPRPYASAYGDNEI), 85–110 (HAKENMGAIGEFEPRPNASAYGDNEI), 111–136 (HANENKGASGEFEPRPNISAYGDNEI), and 137–162 (HANENKGAIGEFETRPNASAYGDNEI). The segment at 59–162 (HAKENMGAIG…NASAYGDNEI (104 aa)) is 4 X 26 AA tandem repeats. Positions 94–181 (GEFEPRPNAS…PRPSMTKYNA (88 aa)) are disordered.

This sequence to organ specific protein P4. In terms of tissue distribution, expressed in stems.

In Pisum sativum (Garden pea), this protein is Organ-specific protein S2.